The chain runs to 685 residues: Probable glucan endo-1,3-beta-glucosidase btgC (685 aa).

Disordered stretches follow at residues 1-96 (MSGP…NLGP), 119-168 (GIDA…RDSY), and 180-202 (PAGQ…SPYQ). Topologically, residues 1 to 312 (MSGPHRSFSF…PTPGGGSRKR (312 aa)) are cytoplasmic. 2 stretches are compositionally biased toward polar residues: residues 47-61 (SARS…SSGF) and 73-90 (GQNS…TTPG). A helical; Signal-anchor for type II membrane protein membrane pass occupies residues 313–333 (GWIVGLALAFIVVGAIVGGAV). The Extracellular segment spans residues 334–685 (GGTLGNRENE…IPDCGGKTAA (352 aa)). The disordered stretch occupies residues 335–369 (GTLGNRENEAPDTTKSASSDTESNGDLNKDSSEIK). The span at 345–360 (PDTTKSASSDTESNGD) shows a compositional bias: polar residues. 3 N-linked (GlcNAc...) asparagine glycosylation sites follow: Asn-405, Asn-428, and Asn-456. Catalysis depends on Glu-488, which acts as the Proton donor. The active-site Nucleophile is the Glu-587. The N-linked (GlcNAc...) asparagine glycan is linked to Asn-632.

This sequence belongs to the glycosyl hydrolase 17 family.

It localises to the cell membrane. It catalyses the reaction Hydrolysis of (1-&gt;3)-beta-D-glucosidic linkages in (1-&gt;3)-beta-D-glucans.. Its function is as follows. Glucanases play a role in cell expansion during growth, in cell-cell fusion during mating, and in spore release during sporulation. This enzyme may be involved in beta-glucan degradation. Active on laminarin and lichenan. The protein is Probable glucan endo-1,3-beta-glucosidase btgC (btgC) of Aspergillus oryzae (strain ATCC 42149 / RIB 40) (Yellow koji mold).